We begin with the raw amino-acid sequence, 299 residues long: Biphenyl-2,3-diol 1,2-dioxygenase (299 aa).

VOC domains follow at residues 6–121 (ELGY…IFYG) and 146–267 (GIGH…FGWG). Fe cation-binding residues include His-149, His-212, and Glu-263.

The protein belongs to the extradiol ring-cleavage dioxygenase family. Homooctamer. Requires Fe(2+) as cofactor.

The catalysed reaction is biphenyl-2,3-diol + O2 = 2-hydroxy-6-oxo-6-phenylhexa-2,4-dienoate + H(+). It participates in xenobiotic degradation; biphenyl degradation; 2-hydroxy-2,4-pentadienoate and benzoate from biphenyl: step 3/4. The chain is Biphenyl-2,3-diol 1,2-dioxygenase (bphC) from Sphingomonas paucimobilis (Pseudomonas paucimobilis).